Here is a 550-residue protein sequence, read N- to C-terminus: Gamma-aminobutyric acid receptor subunit beta (550 aa).

The first 24 residues, 1–24 (MRRSKTRRIFHVSITLLLVSTIFC), serve as a signal peptide directing secretion. Topologically, residues 25–264 (QNGTKPHNNS…FQLRRSVGYF (240 aa)) are extracellular. N-linked (GlcNAc...) asparagine glycans are attached at residues Asn26, Asn32, Asn33, Asn45, Asn53, and Asn193. A disulfide bond links Cys180 and Cys194. Transmembrane regions (helical) follow at residues 265-285 (IFQT…SFWI), 292-311 (ARVA…STGV), and 324-344 (IDIY…EYAA). At 345-527 (VNYSYWGRER…DVNLIDKYSR (183 aa)) the chain is on the cytoplasmic side. The segment at 405-465 (AMSTSNTAAQ…TTSLKGARPH (61 aa)) is disordered. Residues 406-421 (MSTSNTAAQNNNFEST) are compositionally biased toward polar residues. Residues 528 to 548 (VVFPVCFIVFNLFYWSYYMMV) traverse the membrane as a helical segment.

It belongs to the ligand-gated ion channel (TC 1.A.9) family. Gamma-aminobutyric acid receptor (TC 1.A.9.5) subfamily.

It localises to the postsynaptic cell membrane. Its subcellular location is the cell membrane. Functionally, GABA, an inhibitory neurotransmitter, mediates neuronal inhibition by binding to the GABA receptor and opening an integral chloride channel. The chain is Gamma-aminobutyric acid receptor subunit beta (gab-1) from Caenorhabditis elegans.